Here is a 966-residue protein sequence, read N- to C-terminus: Insulin-degrading enzyme-like 2 (966 aa).

Zn(2+) is bound at residue His71. The active-site Proton acceptor is the Glu74. His75 serves as a coordination point for Zn(2+). Residue Glu145 is part of the active site. Glu152 serves as a coordination point for Zn(2+).

This sequence belongs to the peptidase M16 family. Requires Zn(2+) as cofactor.

The chain is Insulin-degrading enzyme-like 2 from Arabidopsis thaliana (Mouse-ear cress).